The chain runs to 324 residues: ATP-dependent 6-phosphofructokinase (324 aa).

G15 is a binding site for ATP. 25–29 provides a ligand contact to ADP; that stretch reads RGVVR. Residues 76–77 and 106–109 each bind ATP; these read RF and GDGS. Position 107 (D107) interacts with Mg(2+). 130 to 132 contributes to the substrate binding site; it reads TID. D132 (proton acceptor) is an active-site residue. An ADP-binding site is contributed by R159. Substrate is bound by residues R167 and 174–176; that span reads MGR. Residues 190–192, K216, and 218–220 contribute to the ADP site; these read GCE and KRH. Substrate-binding positions include E227, R248, and 254–257; that span reads HIQR.

Belongs to the phosphofructokinase type A (PFKA) family. ATP-dependent PFK group I subfamily. Prokaryotic clade 'B1' sub-subfamily. In terms of assembly, homotetramer. It depends on Mg(2+) as a cofactor.

It localises to the cytoplasm. The enzyme catalyses beta-D-fructose 6-phosphate + ATP = beta-D-fructose 1,6-bisphosphate + ADP + H(+). It participates in carbohydrate degradation; glycolysis; D-glyceraldehyde 3-phosphate and glycerone phosphate from D-glucose: step 3/4. Its activity is regulated as follows. Allosterically activated by ADP and other diphosphonucleosides, and allosterically inhibited by phosphoenolpyruvate. Catalyzes the phosphorylation of D-fructose 6-phosphate to fructose 1,6-bisphosphate by ATP, the first committing step of glycolysis. This is ATP-dependent 6-phosphofructokinase from Haemophilus ducreyi (strain 35000HP / ATCC 700724).